The chain runs to 538 residues: Atos homolog protein B (538 aa).

Disordered stretches follow at residues methionine 1–valine 99, glutamine 165–threonine 185, and lysine 199–glycine 270. Positions histidine 227–cysteine 238 are enriched in pro residues. A phosphoserine mark is found at serine 254 and serine 255. The segment at leucine 348–threonine 430 is required for macropage invasion. Residues glutamine 436–valine 444 are transactivation domain 1 (TAD1).

It belongs to the ATOS family.

The protein resides in the nucleus. Its function is as follows. Transcription regulator that syncronizes transcriptional and translational programs to promote macrophage invasion of tissues. In Mus musculus (Mouse), this protein is Atos homolog protein B.